The following is a 248-amino-acid chain: Small ribosomal subunit protein uS3 (248 aa).

The region spanning 38–106 (IREFLSEGLE…QVQLNILEVK (69 aa)) is the KH type-2 domain. The span at 214–229 (SLMNARDERPSRGGRR) shows a compositional bias: basic and acidic residues. The segment at 214-248 (SLMNARDERPSRGGRRERPRRGGARRQRAEKKQEG) is disordered. Over residues 230-242 (ERPRRGGARRQRA) the composition is skewed to basic residues.

The protein belongs to the universal ribosomal protein uS3 family. As to quaternary structure, part of the 30S ribosomal subunit. Forms a tight complex with proteins S10 and S14.

Functionally, binds the lower part of the 30S subunit head. Binds mRNA in the 70S ribosome, positioning it for translation. This is Small ribosomal subunit protein uS3 from Corynebacterium urealyticum (strain ATCC 43042 / DSM 7109).